Here is a 372-residue protein sequence, read N- to C-terminus: 4-hydroxy-3-methylbut-2-en-1-yl diphosphate synthase (flavodoxin) (372 aa).

C270, C273, C305, and E312 together coordinate [4Fe-4S] cluster.

This sequence belongs to the IspG family. Requires [4Fe-4S] cluster as cofactor.

The enzyme catalyses (2E)-4-hydroxy-3-methylbut-2-enyl diphosphate + oxidized [flavodoxin] + H2O + 2 H(+) = 2-C-methyl-D-erythritol 2,4-cyclic diphosphate + reduced [flavodoxin]. The protein operates within isoprenoid biosynthesis; isopentenyl diphosphate biosynthesis via DXP pathway; isopentenyl diphosphate from 1-deoxy-D-xylulose 5-phosphate: step 5/6. In terms of biological role, converts 2C-methyl-D-erythritol 2,4-cyclodiphosphate (ME-2,4cPP) into 1-hydroxy-2-methyl-2-(E)-butenyl 4-diphosphate. This is 4-hydroxy-3-methylbut-2-en-1-yl diphosphate synthase (flavodoxin) from Vibrio parahaemolyticus serotype O3:K6 (strain RIMD 2210633).